The primary structure comprises 372 residues: Aminomethyltransferase (372 aa).

The protein belongs to the GcvT family. In terms of assembly, the glycine cleavage system is composed of four proteins: P, T, L and H.

It carries out the reaction N(6)-[(R)-S(8)-aminomethyldihydrolipoyl]-L-lysyl-[protein] + (6S)-5,6,7,8-tetrahydrofolate = N(6)-[(R)-dihydrolipoyl]-L-lysyl-[protein] + (6R)-5,10-methylene-5,6,7,8-tetrahydrofolate + NH4(+). In terms of biological role, the glycine cleavage system catalyzes the degradation of glycine. The sequence is that of Aminomethyltransferase from Burkholderia orbicola (strain MC0-3).